Here is a 137-residue protein sequence, read N- to C-terminus: Proofreading thioesterase EntH (137 aa).

Glu-63 serves as the catalytic Nucleophile or proton acceptor.

The protein belongs to the thioesterase PaaI family. As to quaternary structure, homotetramer. Dimer of dimers. Interacts specifically with the aryl carrier protein (ArCP) domain of EntB.

The protein localises to the cytoplasm. The protein operates within siderophore biosynthesis; enterobactin biosynthesis. Functionally, required for optimal enterobactin synthesis. Acts as a proofreading enzyme that prevents EntB misacylation by hydrolyzing the thioester bound existing between EntB and wrongly charged molecules. The sequence is that of Proofreading thioesterase EntH from Salmonella paratyphi A (strain AKU_12601).